Consider the following 390-residue polypeptide: Acetylornithine aminotransferase (390 aa).

Pyridoxal 5'-phosphate contacts are provided by residues 103–104 (GT) and F129. Residue R132 coordinates N(2)-acetyl-L-ornithine. 214–217 (DEVQ) is a pyridoxal 5'-phosphate binding site. K243 is modified (N6-(pyridoxal phosphate)lysine). S271 provides a ligand contact to N(2)-acetyl-L-ornithine. Residue T272 participates in pyridoxal 5'-phosphate binding. K304 is covalently cross-linked (Isoglutamyl lysine isopeptide (Lys-Gln) (interchain with Q-Cter in protein Pup)).

The protein belongs to the class-III pyridoxal-phosphate-dependent aminotransferase family. ArgD subfamily. Homodimer. Requires pyridoxal 5'-phosphate as cofactor.

It is found in the cytoplasm. It catalyses the reaction N(2)-acetyl-L-ornithine + 2-oxoglutarate = N-acetyl-L-glutamate 5-semialdehyde + L-glutamate. Its pathway is amino-acid biosynthesis; L-arginine biosynthesis; N(2)-acetyl-L-ornithine from L-glutamate: step 4/4. The chain is Acetylornithine aminotransferase from Mycolicibacterium smegmatis (strain ATCC 700084 / mc(2)155) (Mycobacterium smegmatis).